Consider the following 397-residue polypeptide: Phosphoglycerate kinase (397 aa).

Substrate contacts are provided by residues 21 to 23 (DFN), R37, 60 to 63 (HLGR), R119, and R152. ATP-binding positions include K203, G294, E325, and 354–357 (GGDS).

The protein belongs to the phosphoglycerate kinase family. In terms of assembly, monomer.

The protein resides in the cytoplasm. It catalyses the reaction (2R)-3-phosphoglycerate + ATP = (2R)-3-phospho-glyceroyl phosphate + ADP. It functions in the pathway carbohydrate degradation; glycolysis; pyruvate from D-glyceraldehyde 3-phosphate: step 2/5. This Chlorobium phaeovibrioides (strain DSM 265 / 1930) (Prosthecochloris vibrioformis (strain DSM 265)) protein is Phosphoglycerate kinase.